The following is a 271-amino-acid chain: N-acetylaspartate synthetase (271 aa).

The segment at 1–38 (MTYRGTRKSPCCSPPPRCGPPLPSGPAGSALGPPSSGA) is disordered. A compositionally biased stretch (pro residues) spans 12–24 (CSPPPRCGPPLPS). Residues 25–37 (GPAGSALGPPSSG) show a composition bias toward low complexity. Residues 89–109 (VYAVIIIMCFVVTKSLLVTCC) traverse the membrane as a helical segment. One can recognise an N-acetyltransferase domain in the interval 115-258 (LGMRYYYSRK…HSLLERLFFQ (144 aa)).

The protein belongs to the NAT8 family.

The protein localises to the cytoplasm. It is found in the microsome membrane. Its subcellular location is the mitochondrion membrane. The protein resides in the endoplasmic reticulum membrane. The catalysed reaction is L-aspartate + acetyl-CoA = N-acetyl-L-aspartate + CoA + H(+). Functionally, catalyzes the synthesis of N-acetylaspartate acid (NAA) from L-aspartate and acetyl-CoA. The sequence is that of N-acetylaspartate synthetase (nat8l) from Xenopus tropicalis (Western clawed frog).